The chain runs to 88 residues: Period circadian protein (88 aa).

Residues 23 to 88 (VTNTSIAGTG…VTLTESLLNK (66 aa)) form a disordered region. 16 consecutive repeat copies span residues 30 to 31 (GT), 33 to 34 (GT), 35 to 36 (GT), 37 to 38 (GT), 39 to 40 (GT), 41 to 42 (GT), 43 to 44 (GT), 45 to 46 (GT), 47 to 48 (GT), 49 to 50 (GT), 51 to 52 (GT), 53 to 54 (GT), 55 to 56 (GT), 57 to 58 (GT), 59 to 60 (GT), and 61 to 62 (GN). The interval 30-62 (GTGGTGTGTGTGTGTGTGTGTGTGTGTGTGTGN) is 16 X 2 AA tandem repeats of G-[TN]. A compositionally biased stretch (gly residues) spans 30-62 (GTGGTGTGTGTGTGTGTGTGTGTGTGTGTGTGN). Residues 79-88 (VTLTESLLNK) are compositionally biased toward polar residues.

As to quaternary structure, forms a heterodimer with timeless (TIM); the complex then translocates into the nucleus. Post-translationally, phosphorylated with a circadian rhythmicity, probably by the double-time protein (dbt). Phosphorylation could be implicated in the stability of per monomer and in the formation of heterodimer per-tim.

The protein localises to the nucleus. It is found in the cytoplasm. It localises to the perinuclear region. Its function is as follows. Essential for biological clock functions. Determines the period length of circadian and ultradian rhythms; an increase in PER dosage leads to shortened circadian rhythms and a decrease leads to lengthened circadian rhythms. Essential for the circadian rhythmicity of locomotor activity, eclosion behavior, and for the rhythmic component of the male courtship song that originates in the thoracic nervous system. The biological cycle depends on the rhythmic formation and nuclear localization of the TIM-PER complex. Light induces the degradation of TIM, which promotes elimination of PER. Nuclear activity of the heterodimer coordinatively regulates PER and TIM transcription through a negative feedback loop. Behaves as a negative element in circadian transcriptional loop. Does not appear to bind DNA, suggesting indirect transcriptional inhibition. This Drosophila teissieri (Fruit fly) protein is Period circadian protein (per).